Here is a 629-residue protein sequence, read N- to C-terminus: tRNA uridine 5-carboxymethylaminomethyl modification enzyme MnmG (629 aa).

FAD-binding positions include 13 to 18 (GGGHAG), Val-125, and Ser-180. Residue 273 to 287 (GPRYCPSIEDKVMRF) participates in NAD(+) binding. Gln-370 provides a ligand contact to FAD.

The protein belongs to the MnmG family. Homodimer. Heterotetramer of two MnmE and two MnmG subunits. It depends on FAD as a cofactor.

It is found in the cytoplasm. In terms of biological role, NAD-binding protein involved in the addition of a carboxymethylaminomethyl (cmnm) group at the wobble position (U34) of certain tRNAs, forming tRNA-cmnm(5)s(2)U34. The polypeptide is tRNA uridine 5-carboxymethylaminomethyl modification enzyme MnmG (Escherichia coli O139:H28 (strain E24377A / ETEC)).